A 253-amino-acid polypeptide reads, in one-letter code: uncharacterized protein (253 aa).

Residues M1–G19 form the signal peptide. A lipid anchor (N-palmitoyl cysteine) is attached at C20. C20 carries the S-diacylglycerol cysteine lipid modification.

Belongs to the staphylococcal tandem lipoprotein family.

It localises to the cell membrane. This is an uncharacterized protein from Staphylococcus epidermidis (strain ATCC 12228 / FDA PCI 1200).